The chain runs to 126 residues: Histone H2B type 1-N (126 aa).

The span at 1–12 (MPEPSKSAPAPK) shows a compositional bias: low complexity. A disordered region spans residues 1-36 (MPEPSKSAPAPKKGSKKAVTKAQKKDGKKRKRSRKE). Residue P2 is modified to N-acetylproline. E3 carries the ADP-ribosyl glutamic acid modification. An N6-(2-hydroxyisobutyryl)lysine; alternate modification is found at K6. Residue K6 is modified to N6-(beta-hydroxybutyryl)lysine; alternate. The residue at position 6 (K6) is an N6-acetyllysine; alternate. K6 is modified (N6-butyryllysine; alternate). N6-crotonyllysine; alternate is present on K6. K6 carries the post-translational modification N6-lactoyllysine; alternate. K6 is covalently cross-linked (Glycyl lysine isopeptide (Lys-Gly) (interchain with G-Cter in SUMO2); alternate). An ADP-ribosylserine modification is found at S7. K12 bears the N6-(beta-hydroxybutyryl)lysine; alternate mark. N6-acetyllysine; alternate occurs at positions 12 and 13. Residues K12 and K13 each carry the N6-crotonyllysine; alternate modification. K12 bears the N6-lactoyllysine; alternate mark. At K13 the chain carries N6-(2-hydroxyisobutyryl)lysine; alternate. A Phosphoserine; by STK4/MST1 modification is found at S15. K16, K17, K21, and K24 each carry N6-acetyllysine; alternate. N6-crotonyllysine; alternate is present on residues K16, K17, K21, and K24. An N6-lactoyllysine; alternate mark is found at K16, K17, K21, and K24. Position 17 is an N6-glutaryllysine; alternate (K17). 2 positions are modified to N6-(2-hydroxyisobutyryl)lysine; alternate: K21 and K24. K21 carries the N6-(beta-hydroxybutyryl)lysine; alternate modification. K21 bears the N6-butyryllysine; alternate mark. K21 participates in a covalent cross-link: Glycyl lysine isopeptide (Lys-Gly) (interchain with G-Cter in SUMO2); alternate. K25 is modified (N6-(2-hydroxyisobutyryl)lysine). K35 bears the N6-(2-hydroxyisobutyryl)lysine; alternate mark. K35 is subject to N6-(beta-hydroxybutyryl)lysine; alternate. K35 carries the N6-crotonyllysine; alternate modification. N6-glutaryllysine; alternate is present on K35. K35 carries the post-translational modification N6-succinyllysine; alternate. K35 participates in a covalent cross-link: Glycyl lysine isopeptide (Lys-Gly) (interchain with G-Cter in ubiquitin); alternate. The residue at position 36 (E36) is a PolyADP-ribosyl glutamic acid. S37 carries the phosphoserine; by AMPK modification. An N6-(2-hydroxyisobutyryl)lysine; alternate mark is found at K44, K47, and K58. K44 bears the N6-lactoyllysine; alternate mark. 2 positions are modified to N6-glutaryllysine; alternate: K44 and K47. An N6-methyllysine; alternate modification is found at K47. Residue K58 is modified to N6,N6-dimethyllysine; alternate. Dimethylated arginine is present on R80. At K86 the chain carries N6-(2-hydroxyisobutyryl)lysine; alternate. K86 carries the post-translational modification N6-acetyllysine; alternate. K86 is modified (N6-lactoyllysine; alternate). K86 bears the N6,N6,N6-trimethyllysine; alternate mark. Omega-N-methylarginine is present on residues R87 and R93. K109 carries the N6-(2-hydroxyisobutyryl)lysine; alternate modification. An N6-lactoyllysine; alternate modification is found at K109. N6-glutaryllysine; alternate is present on K109. K109 is modified (N6-methyllysine; alternate). S113 carries O-linked (GlcNAc) serine glycosylation. T116 carries the phosphothreonine modification. K117 and K121 each carry N6-(2-hydroxyisobutyryl)lysine; alternate. An N6-(beta-hydroxybutyryl)lysine; alternate modification is found at K117. Residues K117 and K121 each carry the N6-lactoyllysine; alternate modification. N6-glutaryllysine; alternate occurs at positions 117 and 121. K117 and K121 each carry N6-succinyllysine; alternate. K117 is subject to N6-methylated lysine; alternate. A Glycyl lysine isopeptide (Lys-Gly) (interchain with G-Cter in ubiquitin); alternate cross-link involves residue K121.

It belongs to the histone H2B family. The nucleosome is a histone octamer containing two molecules each of H2A, H2B, H3 and H4 assembled in one H3-H4 heterotetramer and two H2A-H2B heterodimers. The octamer wraps approximately 147 bp of DNA. Monoubiquitination at Lys-35 (H2BK34Ub) by the MSL1/MSL2 dimer is required for histone H3 'Lys-4' (H3K4me) and 'Lys-79' (H3K79me) methylation and transcription activation at specific gene loci, such as HOXA9 and MEIS1 loci. Similarly, monoubiquitination at Lys-121 (H2BK120Ub) by the RNF20/40 complex gives a specific tag for epigenetic transcriptional activation and is also prerequisite for histone H3 'Lys-4' and 'Lys-79' methylation. It also functions cooperatively with the FACT dimer to stimulate elongation by RNA polymerase II. H2BK120Ub also acts as a regulator of mRNA splicing: deubiquitination by USP49 is required for efficient cotranscriptional splicing of a large set of exons. In terms of processing, phosphorylated on Ser-15 (H2BS14ph) by STK4/MST1 during apoptosis; which facilitates apoptotic chromatin condensation. Also phosphorylated on Ser-15 in response to DNA double strand breaks (DSBs), and in correlation with somatic hypermutation and immunoglobulin class-switch recombination. Phosphorylation at Ser-37 (H2BS36ph) by AMPK in response to stress promotes transcription. Post-translationally, glcNAcylation at Ser-113 promotes monoubiquitination of Lys-121. It fluctuates in response to extracellular glucose, and associates with transcribed genes. ADP-ribosylated by PARP1 or PARP2 on Ser-7 (H2BS6ADPr) in response to DNA damage. H2BS6ADPr promotes recruitment of CHD1L. Mono-ADP-ribosylated on Glu-3 (H2BE2ADPr) by PARP3 in response to single-strand breaks. Poly ADP-ribosylation on Glu-36 (H2BE35ADPr) by PARP1 regulates adipogenesis: it inhibits phosphorylation at Ser-37 (H2BS36ph), thereby blocking expression of pro-adipogenetic genes. In terms of processing, crotonylation (Kcr) is specifically present in male germ cells and marks testis-specific genes in post-meiotic cells, including X-linked genes that escape sex chromosome inactivation in haploid cells. Crotonylation marks active promoters and enhancers and confers resistance to transcriptional repressors. It is also associated with post-meiotically activated genes on autosomes. Post-translationally, lactylated in macrophages by EP300/P300 by using lactoyl-CoA directly derived from endogenous or exogenous lactate, leading to stimulates gene transcription.

It is found in the nucleus. The protein localises to the chromosome. Its function is as follows. Core component of nucleosome. Nucleosomes wrap and compact DNA into chromatin, limiting DNA accessibility to the cellular machineries which require DNA as a template. Histones thereby play a central role in transcription regulation, DNA repair, DNA replication and chromosomal stability. DNA accessibility is regulated via a complex set of post-translational modifications of histones, also called histone code, and nucleosome remodeling. This chain is Histone H2B type 1-N (H2BC15), found in Bos taurus (Bovine).